The following is a 145-amino-acid chain: Large ribosomal subunit protein bL9 (145 aa).

It belongs to the bacterial ribosomal protein bL9 family.

Functionally, binds to the 23S rRNA. The chain is Large ribosomal subunit protein bL9 from Mesomycoplasma hyopneumoniae (strain 7448) (Mycoplasma hyopneumoniae).